Here is a 359-residue protein sequence, read N- to C-terminus: 3-dehydroquinate synthase (359 aa).

NAD(+) is bound by residues 71–76 (DGEQFK), 105–109 (GVIGD), 129–130 (TT), lysine 142, lysine 151, and 169–172 (CLHT). Residues glutamate 184, histidine 247, and histidine 264 each coordinate Zn(2+).

Belongs to the sugar phosphate cyclases superfamily. Dehydroquinate synthase family. The cofactor is Co(2+). Zn(2+) is required as a cofactor. NAD(+) serves as cofactor.

Its subcellular location is the cytoplasm. It carries out the reaction 7-phospho-2-dehydro-3-deoxy-D-arabino-heptonate = 3-dehydroquinate + phosphate. It participates in metabolic intermediate biosynthesis; chorismate biosynthesis; chorismate from D-erythrose 4-phosphate and phosphoenolpyruvate: step 2/7. Functionally, catalyzes the conversion of 3-deoxy-D-arabino-heptulosonate 7-phosphate (DAHP) to dehydroquinate (DHQ). This is 3-dehydroquinate synthase from Shewanella putrefaciens (strain CN-32 / ATCC BAA-453).